A 231-amino-acid chain; its full sequence is ATP phosphoribosyltransferase (231 aa).

Belongs to the ATP phosphoribosyltransferase family. Short subfamily. As to quaternary structure, heteromultimer composed of HisG and HisZ subunits.

Its subcellular location is the cytoplasm. The enzyme catalyses 1-(5-phospho-beta-D-ribosyl)-ATP + diphosphate = 5-phospho-alpha-D-ribose 1-diphosphate + ATP. The protein operates within amino-acid biosynthesis; L-histidine biosynthesis; L-histidine from 5-phospho-alpha-D-ribose 1-diphosphate: step 1/9. Functionally, catalyzes the condensation of ATP and 5-phosphoribose 1-diphosphate to form N'-(5'-phosphoribosyl)-ATP (PR-ATP). Has a crucial role in the pathway because the rate of histidine biosynthesis seems to be controlled primarily by regulation of HisG enzymatic activity. This chain is ATP phosphoribosyltransferase, found in Brucella anthropi (strain ATCC 49188 / DSM 6882 / CCUG 24695 / JCM 21032 / LMG 3331 / NBRC 15819 / NCTC 12168 / Alc 37) (Ochrobactrum anthropi).